The sequence spans 224 residues: Viral late gene transcription factor 3 (224 aa).

Belongs to the orthopoxvirus VLTF-3/OPG127 family. Interacts with the late transcription elongation factor VLTF-4/OPG110. Interacts with the late transcription factors VLTF-1/OPG093.

Its function is as follows. Acts with RNA polymerase to initiate transcription from late gene promoters. This chain is Viral late gene transcription factor 3 (OPG127), found in Monkeypox virus.